Consider the following 493-residue polypeptide: Aerolysin (493 aa).

The N-terminal stretch at 1–23 is a signal peptide; the sequence is MQKIKLTGLSLIISGLLMAQAQA. 2 cysteine pairs are disulfide-bonded: Cys42-Cys98 and Cys182-Cys187. The interaction with host N-linked glycan stretch occupies residues 68–84; it reads WQISGLANGWVIMGPGY. Residues 256–288 are part of the transmembrane beta-barrel after proteolytic activation of the toxin and insertion into the host membrane; the sequence is YGLSEKVTTKNKFKWPLVGETELSIEIAANQSW. The interaction with glycans from host GPI-anchor stretch occupies residues 346 to 355; that stretch reads RWGGNAWYTH. Residues 446-493 constitute a propeptide that is removed on maturation; that stretch reads AADSKVRRARSVDGAGQGLRLEIPLDAQELSGLGFNNVSLSVTPAANQ.

This sequence belongs to the aerolysin family. As to quaternary structure, homodimer in solution; homoheptamer in the host membrane. After binding to GPI-anchored proteins in target membranes and proteolytic removal of the C-terminal propeptide, the protein assembles into a heptameric pre-pore complex. A further conformation change leads to insertion into the host membrane. Post-translationally, proteolytic cleavage and subsequent release of the propeptide trigger a major conformation change, leading to the formation of a heptameric pre-pore that then inserts into the host membrane.

Its subcellular location is the secreted. The protein resides in the host cell membrane. Secreted, cytolytic toxin that forms pores in host membranes after proteolytic removal of a C-terminal propeptide, leading to destruction of the membrane permeability barrier and host cell death. The pores are formed by transmembrane beta-strands and are approximately 3 nm in diameter. The sequence is that of Aerolysin (aerA) from Aeromonas hydrophila.